The chain runs to 1167 residues: mRNA 3'-end-processing protein rna-14 (1167 aa).

The disordered stretch occupies residues 1–245 (MSDDYDPTNI…DPTPVTQPAP (245 aa)). Acidic residues-rich tracts occupy residues 16–26 (EEQEDYGEADG) and 70–79 (NTDDVGDDYD). Over residues 102 to 111 (TAPQPAAPVA) the composition is skewed to low complexity. The segment covering 124–137 (DSDDEDEDGDDDGE) has biased composition (acidic residues). Composition is skewed to low complexity over residues 138-150 (PQQQ…QQQP) and 159-191 (GSGA…PQTA). Residues 192 to 218 (TLTVQDNAGATTFNAPPVPQQVSHQSG) are compositionally biased toward polar residues. Residues 219-245 (ATTAAVPTTPSSAAPAVDPTPVTQPAP) show a composition bias toward low complexity. HAT repeat units lie at residues 277-309 (NDID…LELS), 311-342 (NNFP…YIRR), 352-387 (QARQ…FIKF), 401-434 (QKMD…FEMG), 471-504 (TNLP…WEKS), and 518-550 (LYQK…WCFD). The span at 882-893 (QQQPQLPMSQRD) shows a compositional bias: polar residues. Disordered regions lie at residues 882-980 (QQQP…SGAG) and 1075-1167 (AYRE…PPPY). Residues 908-922 (SPSAGPGAPFAPYAA) are compositionally biased toward low complexity. Residues 924–946 (RPLDDRDYDDHPRKIARSEHDPF) show a composition bias toward basic and acidic residues. Gly residues predominate over residues 969 to 979 (GAAGAYSGSGA). The segment covering 1079–1090 (SPGPLGGRPLSP) has biased composition (low complexity). The segment covering 1121 to 1134 (EPPPAAQYGVPPPA) has biased composition (pro residues). The segment covering 1135-1151 (QYDGGWAQQQQQQQYGQ) has biased composition (low complexity).

It is found in the nucleus. The protein resides in the cytoplasm. Its function is as follows. Component of the cleavage factor IA (CFIA) complex, which is involved in the endonucleolytic cleavage during polyadenylation-dependent pre-mRNA 3'-end formation. The chain is mRNA 3'-end-processing protein rna-14 (rna-14) from Neurospora crassa (strain ATCC 24698 / 74-OR23-1A / CBS 708.71 / DSM 1257 / FGSC 987).